Consider the following 214-residue polypeptide: Cytochrome c biogenesis ATP-binding export protein CcmA (214 aa).

One can recognise an ABC transporter domain in the interval 4 to 214 (LAVDQLTVSR…FDHGFDGAFL (211 aa)). 36–43 (GPNGIGKT) provides a ligand contact to ATP.

It belongs to the ABC transporter superfamily. CcmA exporter (TC 3.A.1.107) family. The complex is composed of two ATP-binding proteins (CcmA) and two transmembrane proteins (CcmB).

The protein resides in the cell inner membrane. The catalysed reaction is heme b(in) + ATP + H2O = heme b(out) + ADP + phosphate + H(+). Functionally, part of the ABC transporter complex CcmAB involved in the biogenesis of c-type cytochromes; once thought to export heme, this seems not to be the case, but its exact role is uncertain. Responsible for energy coupling to the transport system. This is Cytochrome c biogenesis ATP-binding export protein CcmA from Rhodobacter capsulatus (strain ATCC BAA-309 / NBRC 16581 / SB1003).